A 224-amino-acid polypeptide reads, in one-letter code: Cytidylate kinase (224 aa).

Residue 11–19 (GPAAAGKST) participates in ATP binding.

The protein belongs to the cytidylate kinase family. Type 1 subfamily.

It localises to the cytoplasm. It catalyses the reaction CMP + ATP = CDP + ADP. It carries out the reaction dCMP + ATP = dCDP + ADP. The chain is Cytidylate kinase from Bacillus velezensis (strain DSM 23117 / BGSC 10A6 / LMG 26770 / FZB42) (Bacillus amyloliquefaciens subsp. plantarum).